Here is a 500-residue protein sequence, read N- to C-terminus: Ferulic acid decarboxylase 1 (500 aa).

Mn(2+) is bound by residues Asn168, His191, and Glu233. Residues 168-173 (NWSIAR), 190-191 (QH), and Glu233 contribute to the prenylated FMN site. Glu282 acts as the Proton donor in catalysis. Lys391 provides a ligand contact to prenylated FMN.

Belongs to the UbiD family. UbiD-like/FDC subfamily. As to quaternary structure, homodimer. May form higher order oligomers. It depends on Mn(2+) as a cofactor. The cofactor is prenylated FMN.

The protein localises to the cytoplasm. It carries out the reaction (E)-4-coumarate + H(+) = 4-vinylphenol + CO2. The enzyme catalyses (E)-cinnamate + H(+) = styrene + CO2. It catalyses the reaction (E)-ferulate + H(+) = 2-methoxy-4-vinylphenol + CO2. Its function is as follows. Catalyzes the reversible decarboxylation of aromatic carboxylic acids like ferulic acid, p-coumaric acid or cinnamic acid, producing the corresponding vinyl derivatives 4-vinylphenol, 4-vinylguaiacol, and styrene, respectively, which play the role of aroma metabolites. The chain is Ferulic acid decarboxylase 1 from Aspergillus niger (strain ATCC MYA-4892 / CBS 513.88 / FGSC A1513).